Reading from the N-terminus, the 353-residue chain is tRNA N6-adenosine threonylcarbamoyltransferase (353 aa).

2 residues coordinate Fe cation: His111 and His115. Residues 148-152 (LVSGG), Asp181, Gly194, and Asn286 each bind substrate. Asp314 lines the Fe cation pocket.

The protein belongs to the KAE1 / TsaD family. It depends on Fe(2+) as a cofactor.

It is found in the cytoplasm. It catalyses the reaction L-threonylcarbamoyladenylate + adenosine(37) in tRNA = N(6)-L-threonylcarbamoyladenosine(37) in tRNA + AMP + H(+). Required for the formation of a threonylcarbamoyl group on adenosine at position 37 (t(6)A37) in tRNAs that read codons beginning with adenine. Is involved in the transfer of the threonylcarbamoyl moiety of threonylcarbamoyl-AMP (TC-AMP) to the N6 group of A37, together with TsaE and TsaB. TsaD likely plays a direct catalytic role in this reaction. In Blochmanniella floridana, this protein is tRNA N6-adenosine threonylcarbamoyltransferase.